Here is a 224-residue protein sequence, read N- to C-terminus: Claudin-19 (224 aa).

The Cytoplasmic portion of the chain corresponds to 1 to 7 (MANSGLQ). A helical membrane pass occupies residues 8–28 (LLGYFLALGGWVGIIASTALP). Residues 29–81 (QWKQSSYAGDAIITAVGLYEGLWMSCASQSTGQVQCKLYDSLLALDGHIQSAR) are Extracellular-facing. A disulfide bridge links cysteine 54 with cysteine 64. A helical transmembrane segment spans residues 82–102 (ALMVVAVLLGFVAMVLSVVGM). At 103-117 (KCTRVGDSNPTAKSR) the chain is on the cytoplasmic side. Residues 118 to 138 (VAISGGALFLLAGLCTLTAVS) form a helical membrane-spanning segment. Topologically, residues 139–160 (WYATLVTQEFFNPSTPVNARYE) are extracellular. A helical transmembrane segment spans residues 161-181 (FGPALFVGWASAGLAMLGGSF). Residues 182–224 (LCCTCPEPERANSIPQPYRSGPSTAAREPVVKLPASVKGPLGV) lie on the Cytoplasmic side of the membrane.

Belongs to the claudin family. In terms of assembly, can form homo- and heteropolymeric tight junction strands. Interacts with other claudins including CLDN3, CLDN10, CLDN16 and CLDN18 with highest affinity for CLDN16. Interacts (via PDZ-binding motif TRV) with TJP1 (via PDZ domain). (Microbial infection) Interacts (via both extracellular domains) with Clostridium perfringens enterotoxin CPE; the interaction disrupts claudin assembly in tight junctions. Expressed in the corticomedullary axis of the TAL, specifically in the cortex and the outer stripe of outer medulla (OSOM) zone (at protein level). Expressed in peripheral nervous system, in Schwan cells (at protein level).

It localises to the cell junction. Its subcellular location is the tight junction. It is found in the cell membrane. The catalysed reaction is Mg(2+)(in) = Mg(2+)(out). It carries out the reaction Ca(2+)(in) = Ca(2+)(out). The enzyme catalyses Na(+)(in) = Na(+)(out). It catalyses the reaction K(+)(in) = K(+)(out). The catalysed reaction is Rb(+)(in) = Rb(+)(out). It carries out the reaction Cs(+)(in) = Cs(+)(out). The enzyme catalyses Li(+)(in) = Li(+)(out). Its function is as follows. Forms paracellular channels: coassembles with CLDN16 into tight junction strands with cation-selective channels through the strands, conveying epithelial permeability in a process known as paracellular tight junction permeability. Involved in the maintenance of ion gradients along the nephron. In the thick ascending limb (TAL) of Henle's loop, facilitates sodium paracellular permeability from the interstitial compartment to the lumen, contributing to the lumen-positive transepithelial potential that drives paracellular magnesium and calcium reabsorption. Forms paracellular barriers on its own. In the peripheral nervous system, represents a major constituent of the tight junctions in Schwann cells and contributes to electrical sealing. During retinal neurogenesis, may regulate the barrier properties of tight junctions in retinal pigment epithelium, required for proper retinal tissue differentiation and vision. The polypeptide is Claudin-19 (Mus musculus (Mouse)).